We begin with the raw amino-acid sequence, 262 residues long: Eukaryotic translation initiation factor 3 subunit G (262 aa).

Positions Asn-182 to Pro-260 constitute an RRM domain.

The protein belongs to the eIF-3 subunit G family. Component of the eukaryotic translation initiation factor 3 (eIF-3) complex.

It is found in the cytoplasm. Its function is as follows. RNA-binding component of the eukaryotic translation initiation factor 3 (eIF-3) complex, which is involved in protein synthesis of a specialized repertoire of mRNAs and, together with other initiation factors, stimulates binding of mRNA and methionyl-tRNAi to the 40S ribosome. The eIF-3 complex specifically targets and initiates translation of a subset of mRNAs involved in cell proliferation. This subunit can bind 18S rRNA. Binds to GC-rich 5'UTRs in cholinergic motor neurons, thereby may play a role in translational regulation of mRNAs involved in neuropeptide signaling and stress response, including hlh-30 isoform d and ncs-2. In Caenorhabditis elegans, this protein is Eukaryotic translation initiation factor 3 subunit G.